Here is a 358-residue protein sequence, read N- to C-terminus: Magnesium-protoporphyrin IX monomethyl ester [oxidative] cyclase 1 (358 aa).

The protein belongs to the AcsF family. The cofactor is Fe cation.

The catalysed reaction is Mg-protoporphyrin IX 13-monomethyl ester + 3 NADPH + 3 O2 + 2 H(+) = 3,8-divinyl protochlorophyllide a + 3 NADP(+) + 5 H2O. It participates in porphyrin-containing compound metabolism; chlorophyll biosynthesis (light-independent). Functionally, catalyzes the formation of the isocyclic ring in chlorophyll biosynthesis. Mediates the cyclase reaction, which results in the formation of divinylprotochlorophyllide (Pchlide) characteristic of all chlorophylls from magnesium-protoporphyrin IX 13-monomethyl ester (MgPMME). The protein is Magnesium-protoporphyrin IX monomethyl ester [oxidative] cyclase 1 of Synechocystis sp. (strain ATCC 27184 / PCC 6803 / Kazusa).